The following is a 567-amino-acid chain: Urease subunit alpha (567 aa).

In terms of domain architecture, Urease spans 129–567 (GGIDAHIHFI…LPLAQRYFLF (439 aa)). Residues histidine 134, histidine 136, and lysine 217 each contribute to the Ni(2+) site. At lysine 217 the chain carries N6-carboxylysine. Residue histidine 219 coordinates substrate. Positions 246 and 272 each coordinate Ni(2+). Histidine 320 functions as the Proton donor in the catalytic mechanism. Aspartate 360 provides a ligand contact to Ni(2+).

It belongs to the metallo-dependent hydrolases superfamily. Urease alpha subunit family. In terms of assembly, heterotrimer of UreA (gamma), UreB (beta) and UreC (alpha) subunits. Three heterotrimers associate to form the active enzyme. It depends on Ni cation as a cofactor. In terms of processing, carboxylation allows a single lysine to coordinate two nickel ions.

It localises to the cytoplasm. It catalyses the reaction urea + 2 H2O + H(+) = hydrogencarbonate + 2 NH4(+). It participates in nitrogen metabolism; urea degradation; CO(2) and NH(3) from urea (urease route): step 1/1. The polypeptide is Urease subunit alpha (Hahella chejuensis (strain KCTC 2396)).